The sequence spans 893 residues: Dystroglycan 1 (893 aa).

An N-terminal signal peptide occupies residues 1-27 (MSVDNWLLHPLWGQTFLLLLSVAVAQA). The segment at 28 to 406 (HWPSEPSEAV…GQIRPTLTIP (379 aa)) is required for laminin recognition. Residues 47–69 (SMHSVLSDFQEAVPTVVGIPDGT) are O-glycosylated at one site. N-linked (GlcNAc...) asparagine glycosylation occurs at asparagine 139. An intrachain disulfide couples cysteine 180 to cysteine 262. The tract at residues 314–483 (ATPTPVTAIG…PPTRIRTTTS (170 aa)) is mucin-like domain. O-linked (Man6P...) threonine glycosylation is found at threonine 315, threonine 317, and threonine 377. Residues 379–498 (TLGPIQPTRV…GEPNQRPELK (120 aa)) are disordered. Low complexity predominate over residues 409 to 445 (VEPTAVITPPTTTTKKPRVSTPKPATPSTDSSTTTTR). An O-glycosylated at seven sites with GalNAc region spans residues 461–483 (TTKAPITRLETASPPTRIRTTTS). In terms of domain architecture, Peptidase S72 spans 601–710 (KAPARFKARL…LSIAVTGSGS (110 aa)). Asparagine 639, asparagine 647, and asparagine 659 each carry an N-linked (GlcNAc...) asparagine glycan. The Extracellular portion of the chain corresponds to 652-751 (SIVVEWTNNT…SSEDDVYLHT (100 aa)). Cysteine 667 and cysteine 711 are joined by a disulfide. The disordered stretch occupies residues 722–744 (PSPGSSAAPATEVPDRDPEKSSE). The span at 734–744 (VPDRDPEKSSE) shows a compositional bias: basic and acidic residues. The chain crosses the membrane as a helical span at residues 752-772 (VIPAVVVAAILLIAGIIAMIC). Residues 773 to 893 (YRKKRKGKLT…YRSPPPYVPP (121 aa)) are Cytoplasmic-facing. Residues 774–780 (RKKRKGK) carry the Nuclear localization signal motif. At threonine 788 the chain carries Phosphothreonine. A required for interaction with CAV3 region spans residues 817-893 (LQEEKAPLPP…YRSPPPYVPP (77 aa)). The segment at 821 to 893 (KAPLPPPEYP…YRSPPPYVPP (73 aa)) is disordered. Residues 830-844 (PNQSMPETTPLNQDT) show a composition bias toward polar residues. A compositionally biased stretch (pro residues) spans 857–868 (NAPPYQPPPPFT). The interval 878-893 (PKNMTPYRSPPPYVPP) is required for binding DMD and UTRN. Residues 887–890 (PPPY) carry the PPXY motif motif. The residue at position 890 (tyrosine 890) is a Phosphotyrosine; by SRC.

As to quaternary structure, monomer. Heterodimer of alpha- and beta-dystroglycan subunits which are the central components of the dystrophin-glycoprotein complex. This complex then can form a dystrophin-associated glycoprotein complex (DGC) which is composed of three subcomplexes: a cytoplasmic complex comprised of DMD (or UTRN), DTNA and a number of syntrophins, such as SNTB1, SNTB2, SNTG1 and SNTG2, the transmembrane dystroglycan complex, and the sarcoglycan-sarcospan complex. Interacts (via the N-terminal of alphaDAG1) with LARGE1; the interaction enhances laminin binding. Interacts with SGCD. Interacts with AGR2 and AGR3. Interacts (betaDAG1) with DMD; the interaction is inhibited by phosphorylation on the PPXY motif. Interacts (betaDAG1, via its PPXY motif) with UTRN (via its WWW and ZZ domains); the interaction is inhibited by phosphorylation on the PPXY motif. Interacts (betaDAG1, via its phosphorylated PPXY motif) with the SH2 domain-containing proteins, FYN, CSK, NCK and SHC. Interacts (betaDAG1) with CAV3 (via a central WW-like domain); the interaction disrupts the binding of DMD. BetaDAG1 directly interacts with ANK3, but not with ANK2; this interaction does not interfere with DMD-binding and is required for retention at costameres. Identified in a dystroglycan complex that contains at least PRX, DRP2, UTRN, DMD and DAG1. Interacts with POMGNT1. BetaDAG1 interacts with CD93. O-glycosylated. POMGNT1 catalyzes the initial addition of N-acetylglucosamine, giving rise to the GlcNAc(beta1-2)Man(alpha1-)O-Ser/Thr moiety and thus providing the necessary basis for the addition of further carbohydrate moieties. Heavily O-glycosylated comprising of up to two thirds of its mass and the carbohydrate composition differs depending on tissue type. Mucin-type O-glycosylation is important for ligand binding activity. O-mannosylation is found in high abundance in both brain and muscle where the most abundant glycan is Sia-alpha-2-3-Gal-beta-1-4-Glc-NAc-beta-1-2-Man. In muscle, glycosylation on Thr-315, Thr-317, Thr-379 by a phosphorylated O-mannosyl glycan with the structure 2-(N-acetylamido)-2-deoxygalactosyl-beta-1,3-2-(N-acetylamido)-2-deoxyglucosyl-beta-1,4-6-phosphomannose is mediated by like-acetylglucosaminyltransferase (LARGE1) protein amd is required for laminin binding. O-glycosylated in the N-terminal region with a core 1 or possibly core 8 glycan. The brain form displays a unique glycosylation pattern which is absent in other tissues; this form shows enhanced binding to laminin LAMA5 compared to the skeletal muscle form. In terms of processing, N-glycosylated. Post-translationally, autolytic cleavage produces the alpha and beta subunits. In cutaneous cells, as well as in certain pathological conditions, shedding of beta-dystroglycan can occur releasing a peptide of about 30 kDa. SRC-mediated phosphorylation of the PPXY motif of the beta subunit recruits SH2 domain-containing proteins, but inhibits binding to WWW domain-containing proteins, DMD and UTRN. This phosphorylation also inhibits nuclear entry. As to expression, detected in brain and kidney (at protein level). Detected in sciatic nerve (at protein level). Expressed in neurons and muscle cells (at protein level). Expressed in a variety of tissues. In brain, expressed in the hippocampal formation, the olfactory bulb, the cerebellum and the thalamus. In the peripheral nerve system, expressed in Schwann cells.

The protein resides in the secreted. It is found in the extracellular space. It localises to the cell membrane. Its subcellular location is the cytoplasm. The protein localises to the cytoskeleton. The protein resides in the nucleus. It is found in the nucleoplasm. It localises to the sarcolemma. Its subcellular location is the postsynaptic cell membrane. Functionally, the dystroglycan complex is involved in a number of processes including laminin and basement membrane assembly, sarcolemmal stability, cell survival, peripheral nerve myelination, nodal structure, cell migration, and epithelial polarization. Extracellular peripheral glycoprotein that acts as a receptor for extracellular matrix proteins containing laminin-G domains, and for certain adenoviruses. Receptor for laminin-2 (LAMA2) and agrin in peripheral nerve Schwann cells. Also acts as a receptor for laminin LAMA5. Its function is as follows. Transmembrane protein that plays important roles in connecting the extracellular matrix to the cytoskeleton. Acts as a cell adhesion receptor in both muscle and non-muscle tissues. Receptor for both DMD and UTRN and, through these interactions, scaffolds axin to the cytoskeleton. Also functions in cell adhesion-mediated signaling and implicated in cell polarity. This is Dystroglycan 1 from Mus musculus (Mouse).